A 1065-amino-acid chain; its full sequence is Isoleucine--tRNA ligase (1065 aa).

Positions 49-59 (PYVSGAIHLGT) match the 'HIGH' region motif. The 'KMSKS' region signature appears at 625-629 (KMSKS). ATP is bound at residue Lys628.

The protein belongs to the class-I aminoacyl-tRNA synthetase family. IleS type 2 subfamily. In terms of assembly, monomer. It depends on Zn(2+) as a cofactor.

It is found in the cytoplasm. The enzyme catalyses tRNA(Ile) + L-isoleucine + ATP = L-isoleucyl-tRNA(Ile) + AMP + diphosphate. Functionally, catalyzes the attachment of isoleucine to tRNA(Ile). As IleRS can inadvertently accommodate and process structurally similar amino acids such as valine, to avoid such errors it has two additional distinct tRNA(Ile)-dependent editing activities. One activity is designated as 'pretransfer' editing and involves the hydrolysis of activated Val-AMP. The other activity is designated 'posttransfer' editing and involves deacylation of mischarged Val-tRNA(Ile). This chain is Isoleucine--tRNA ligase, found in Thermococcus kodakarensis (strain ATCC BAA-918 / JCM 12380 / KOD1) (Pyrococcus kodakaraensis (strain KOD1)).